We begin with the raw amino-acid sequence, 318 residues long: D-alanine--D-alanine ligase B (318 aa).

The region spanning 117–315 (KQVWLSLGLS…FEALVWRVLE (199 aa)) is the ATP-grasp domain. Residue 146–201 (AEQIGLPVIVKPANEGSSVGVSRVFDQAQLDEAVTLAARYDGALLMEQLIEGDELT) coordinates ATP. D268, E282, and N284 together coordinate Mg(2+).

Belongs to the D-alanine--D-alanine ligase family. It depends on Mg(2+) as a cofactor. The cofactor is Mn(2+).

Its subcellular location is the cytoplasm. The catalysed reaction is 2 D-alanine + ATP = D-alanyl-D-alanine + ADP + phosphate + H(+). The protein operates within cell wall biogenesis; peptidoglycan biosynthesis. Cell wall formation. This is D-alanine--D-alanine ligase B from Xanthomonas campestris pv. campestris (strain ATCC 33913 / DSM 3586 / NCPPB 528 / LMG 568 / P 25).